Here is a 338-residue protein sequence, read N- to C-terminus: Aspartate carbamoyltransferase catalytic subunit (338 aa).

Carbamoyl phosphate is bound by residues R59 and T60. K87 serves as a coordination point for L-aspartate. R109, H142, and Q145 together coordinate carbamoyl phosphate. L-aspartate-binding residues include R182 and R248. Positions 289 and 290 each coordinate carbamoyl phosphate.

It belongs to the aspartate/ornithine carbamoyltransferase superfamily. ATCase family. Heterododecamer (2C3:3R2) of six catalytic PyrB chains organized as two trimers (C3), and six regulatory PyrI chains organized as three dimers (R2).

It carries out the reaction carbamoyl phosphate + L-aspartate = N-carbamoyl-L-aspartate + phosphate + H(+). The protein operates within pyrimidine metabolism; UMP biosynthesis via de novo pathway; (S)-dihydroorotate from bicarbonate: step 2/3. Functionally, catalyzes the condensation of carbamoyl phosphate and aspartate to form carbamoyl aspartate and inorganic phosphate, the committed step in the de novo pyrimidine nucleotide biosynthesis pathway. In Synechococcus elongatus (strain ATCC 33912 / PCC 7942 / FACHB-805) (Anacystis nidulans R2), this protein is Aspartate carbamoyltransferase catalytic subunit.